A 450-amino-acid polypeptide reads, in one-letter code: Benzene 1,2-dioxygenase subunit alpha (450 aa).

One can recognise a Rieske domain in the interval 54 to 163; it reads WLLLGHETQI…VETYKGLIFA (110 aa). Residues cysteine 96, histidine 98, cysteine 116, and histidine 119 each contribute to the [2Fe-2S] cluster site. Fe cation-binding residues include histidine 222 and histidine 228.

It belongs to the bacterial ring-hydroxylating dioxygenase alpha subunit family. As to quaternary structure, this dioxygenase system consists of four proteins: the two subunits of the hydroxylase component (BnzA and BnzB), a ferredoxin (BnzC) and a ferredoxin reductase (BnzD). The cofactor is [2Fe-2S] cluster. Requires Fe cation as cofactor.

The enzyme catalyses benzene + NADH + O2 + H(+) = cis-1,2-dihydrobenzene-1,2-diol + NAD(+). It carries out the reaction toluene + NADH + O2 + H(+) = (1S,2R)-3-methylcyclohexa-3,5-diene-1,2-diol + NAD(+). It functions in the pathway aromatic compound metabolism; benzene degradation; catechol from benzene: step 1/2. It participates in xenobiotic degradation; toluene degradation. Its pathway is xenobiotic degradation; xylene degradation. Catalyzes both the oxidation of benzene and toluene. The chain is Benzene 1,2-dioxygenase subunit alpha (bnzA) from Pseudomonas putida (strain ATCC 700007 / DSM 6899 / JCM 31910 / BCRC 17059 / LMG 24140 / F1).